A 606-amino-acid polypeptide reads, in one-letter code: Lysosomal cobalamin transporter ABCD4 (606 aa).

Residues 39-332 (NALMFLTLLC…CFTQLIDLST (294 aa)) form the ABC transmembrane type-1 domain. 5 consecutive transmembrane segments (helical) span residues 43-63 (FLTL…VGLI), 76-96 (LEGF…NSTL), 190-210 (IFGY…PIVM), 279-299 (YLGS…GVYG), and 314-334 (AFVC…STTL). The ABC transporter domain maps to 389 to 603 (LERVSISAPS…GGGRWELMRI (215 aa)). 421-428 (GNTGTGKT) contributes to the ATP binding site.

The protein belongs to the ABC transporter superfamily. ABCD family. Peroxisomal fatty acyl CoA transporter (TC 3.A.1.203) subfamily. As to quaternary structure, homodimer or heterodimer. Interacts with LMBRD1; this interaction induces the translocation of ABCD4 from the ER to the lysosome membrane. Interacts with LMBRD1 and MMACHC; this interaction ensures the transport of cobalamin from the lysosome to the cytosol. In terms of tissue distribution, ubiquitous.

It is found in the endoplasmic reticulum membrane. The protein resides in the lysosome membrane. It carries out the reaction an R-cob(III)alamin(out) + ATP + H2O = an R-cob(III)alamin(in) + ADP + phosphate + H(+). In terms of biological role, lysosomal membrane protein that transports cobalamin (Vitamin B12) from the lysosomal lumen to the cytosol in an ATP-dependent manner. Targeted by LMBRD1 lysosomal chaperone from the endoplasmic reticulum to the lysosomal membrane. Then forms a complex with lysosomal chaperone LMBRD1 and cytosolic MMACHC to transport cobalamin across the lysosomal membrane. The protein is Lysosomal cobalamin transporter ABCD4 of Homo sapiens (Human).